The sequence spans 246 residues: 1-(5-phosphoribosyl)-5-[(5-phosphoribosylamino)methylideneamino] imidazole-4-carboxamide isomerase (246 aa).

Asp-12 acts as the Proton acceptor in catalysis. The Proton donor role is filled by Asp-134.

This sequence belongs to the HisA/HisF family.

It is found in the cytoplasm. The catalysed reaction is 1-(5-phospho-beta-D-ribosyl)-5-[(5-phospho-beta-D-ribosylamino)methylideneamino]imidazole-4-carboxamide = 5-[(5-phospho-1-deoxy-D-ribulos-1-ylimino)methylamino]-1-(5-phospho-beta-D-ribosyl)imidazole-4-carboxamide. It functions in the pathway amino-acid biosynthesis; L-histidine biosynthesis; L-histidine from 5-phospho-alpha-D-ribose 1-diphosphate: step 4/9. In Haloarcula marismortui (strain ATCC 43049 / DSM 3752 / JCM 8966 / VKM B-1809) (Halobacterium marismortui), this protein is 1-(5-phosphoribosyl)-5-[(5-phosphoribosylamino)methylideneamino] imidazole-4-carboxamide isomerase.